The sequence spans 221 residues: 2-amino-5-formylamino-6-ribosylaminopyrimidin-4(3H)-one 5'-monophosphate deformylase (221 aa).

Fe cation-binding residues include Glu29, His31, Asp40, and His108.

It belongs to the creatininase superfamily. FAPy deformylase family. Homodimer. The cofactor is Fe(2+). It depends on Zn(2+) as a cofactor.

It catalyses the reaction 2-amino-5-formylamino-6-(5-phospho-D-ribosylamino)pyrimidin-4(3H)-one + H2O = 2,5-diamino-6-(1-D-ribosylamino)pyrimidin-4(3H)-one 5'-phosphate + formate + H(+). It participates in cofactor biosynthesis; coenzyme F420 biosynthesis. Its pathway is cofactor biosynthesis; riboflavin biosynthesis. In terms of biological role, catalyzes the hydrolysis of the formamide of 2-amino-5-formylamino-6-ribosylamino-4(3H)-pyrimidinone 5'-monophosphate (FAPy) to form 2,5-diamino-6-ribosylamino-4(3H)-pyrimidinone 5'-phosphate (APy). The chain is 2-amino-5-formylamino-6-ribosylaminopyrimidin-4(3H)-one 5'-monophosphate deformylase from Methanococcus maripaludis (strain C7 / ATCC BAA-1331).